The chain runs to 146 residues: Ribosome maturation factor RimP (146 aa).

The protein belongs to the RimP family.

It is found in the cytoplasm. Its function is as follows. Required for maturation of 30S ribosomal subunits. This is Ribosome maturation factor RimP from Helicobacter pylori (strain P12).